The sequence spans 273 residues: Eukaryotic translation initiation factor 3 subunit G-2 (273 aa).

The RRM domain maps to 193–271 (SAVRISNLSE…LILCVEWSKP (79 aa)).

It belongs to the eIF-3 subunit G family. In terms of assembly, component of the eukaryotic translation initiation factor 3 (eIF-3) complex. The eIF-3 complex interacts with pix.

It is found in the cytoplasm. In terms of biological role, RNA-binding component of the eukaryotic translation initiation factor 3 (eIF-3) complex, which is involved in protein synthesis of a specialized repertoire of mRNAs and, together with other initiation factors, stimulates binding of mRNA and methionyl-tRNAi to the 40S ribosome. The eIF-3 complex specifically targets and initiates translation of a subset of mRNAs involved in cell proliferation. This subunit can bind 18S rRNA. The protein is Eukaryotic translation initiation factor 3 subunit G-2 of Drosophila melanogaster (Fruit fly).